The following is a 110-amino-acid chain: Secreted RxLR effector protein 89 (110 aa).

The first 22 residues, 1–22 (MTSVVIVVSVAVLLGVLVITDS), serve as a signal peptide directing secretion. N-linked (GlcNAc...) asparagine glycosylation occurs at N29. Residues 61–74 (RHLRTILQWWQERR) carry the RxLR-dEER motif.

This sequence belongs to the RxLR effector family.

It localises to the secreted. Its subcellular location is the host nucleus. The protein resides in the host cytoplasm. Its function is as follows. Secreted effector that completely suppresses the host cell death induced by cell death-inducing proteins. The protein is Secreted RxLR effector protein 89 of Plasmopara viticola (Downy mildew of grapevine).